A 333-amino-acid polypeptide reads, in one-letter code: tRNA N6-adenosine threonylcarbamoyltransferase (333 aa).

His-111 and His-115 together coordinate Fe cation. Residues Val-134–Gly-138, Asp-167, Gly-180, Asp-184, and Asn-269 each bind substrate. Residue Asp-297 coordinates Fe cation.

It belongs to the KAE1 / TsaD family. Fe(2+) is required as a cofactor.

It localises to the cytoplasm. The enzyme catalyses L-threonylcarbamoyladenylate + adenosine(37) in tRNA = N(6)-L-threonylcarbamoyladenosine(37) in tRNA + AMP + H(+). Its function is as follows. Required for the formation of a threonylcarbamoyl group on adenosine at position 37 (t(6)A37) in tRNAs that read codons beginning with adenine. Is involved in the transfer of the threonylcarbamoyl moiety of threonylcarbamoyl-AMP (TC-AMP) to the N6 group of A37, together with TsaE and TsaB. TsaD likely plays a direct catalytic role in this reaction. This is tRNA N6-adenosine threonylcarbamoyltransferase from Carboxydothermus hydrogenoformans (strain ATCC BAA-161 / DSM 6008 / Z-2901).